The following is an 839-amino-acid chain: Homeobox-leucine zipper protein HOX10 (839 aa).

2 disordered regions span residues 1–24 (MAAA…SGMD) and 132–157 (QNTP…RDAS). A DNA-binding region (homeobox) is located at residues 24–87 (DSGKYVRYTP…NRRCRDKQRK (64 aa)). Positions 91–134 (RLQAVNRKLTAMNKLLMEENERLQKQVSQLVHENAHMRQQLQNT) form a coiled coil. Residues 155–383 (DASNPSGLLS…IAQETSGEVV (229 aa)) form the START domain.

Belongs to the HD-ZIP homeobox family. Class III subfamily. Expressed in stems, leaf sheaths and blades and panicles.

Its subcellular location is the nucleus. Its function is as follows. Probable transcription factor. This chain is Homeobox-leucine zipper protein HOX10 (HOX10), found in Oryza sativa subsp. indica (Rice).